The sequence spans 129 residues: Lysozyme C (129 aa).

Positions 1–129 (KVYGRCELAA…VHAWIRGCRL (129 aa)) constitute a C-type lysozyme domain. 4 disulfide bridges follow: Cys-6-Cys-127, Cys-30-Cys-115, Cys-64-Cys-80, and Cys-76-Cys-94. Active-site residues include Glu-35 and Asp-52.

Belongs to the glycosyl hydrolase 22 family. As to quaternary structure, monomer.

It localises to the secreted. It catalyses the reaction Hydrolysis of (1-&gt;4)-beta-linkages between N-acetylmuramic acid and N-acetyl-D-glucosamine residues in a peptidoglycan and between N-acetyl-D-glucosamine residues in chitodextrins.. In terms of biological role, lysozymes have primarily a bacteriolytic function; those in tissues and body fluids are associated with the monocyte-macrophage system and enhance the activity of immunoagents. The protein is Lysozyme C (LYZ) of Pavo cristatus (Indian peafowl).